Here is a 178-residue protein sequence, read N- to C-terminus: Probable chorismate pyruvate-lyase (178 aa).

Substrate contacts are provided by Arg72, Leu110, and Glu169.

This sequence belongs to the UbiC family.

Its subcellular location is the cytoplasm. The enzyme catalyses chorismate = 4-hydroxybenzoate + pyruvate. It participates in cofactor biosynthesis; ubiquinone biosynthesis. Functionally, removes the pyruvyl group from chorismate, with concomitant aromatization of the ring, to provide 4-hydroxybenzoate (4HB) for the ubiquinone pathway. The polypeptide is Probable chorismate pyruvate-lyase (Nitrosomonas europaea (strain ATCC 19718 / CIP 103999 / KCTC 2705 / NBRC 14298)).